Consider the following 448-residue polypeptide: Phosphoglucosamine mutase (448 aa).

Residue serine 104 is the Phosphoserine intermediate of the active site. Serine 104, aspartate 243, aspartate 245, and aspartate 247 together coordinate Mg(2+). Serine 104 bears the Phosphoserine mark.

This sequence belongs to the phosphohexose mutase family. Mg(2+) is required as a cofactor. In terms of processing, activated by phosphorylation.

The enzyme catalyses alpha-D-glucosamine 1-phosphate = D-glucosamine 6-phosphate. Functionally, catalyzes the conversion of glucosamine-6-phosphate to glucosamine-1-phosphate. This chain is Phosphoglucosamine mutase, found in Xylella fastidiosa (strain 9a5c).